A 422-amino-acid chain; its full sequence is MKLIVSRSQISGCVHAPPSKSHTHRAFLLASLAKGESVVLSPLLGEDTLATLSAVKALGANVCEGDDRITIQGGNLHAPLPKGTVINCKNSGTSIRMLAGIASRLDGTTEFTGDASLCSRPMKPLLDALSELGAGVTSDNGCAPFTITGPVSGGDVHIRGDVSSQFISGLLISAPLGKADTRIHLTTPLTSKPYVDMTISAMKKHGVSVETIEDGYLVRSGQVYSSEDVQVGGDYSSAAFLFAAAALAGEIAVSGLDPADPQGDQVVISILETFGAGVVRDGENVTIRKAALKAADIDLANAPDLFPIIAVLASQAKGTSRLYGAAHLRFKESDRIMSTVLFLRSMGADISETEDGCIVTGPANLSGANVTTFGDHRIMMASAVAGLIADSTTTVDDAGCCAVSYPGFVKDMQKLGADMREE.

Residues K20, S21, and R25 each contribute to the 3-phosphoshikimate site. K20 contributes to the phosphoenolpyruvate binding site. Residues G92 and R120 each contribute to the phosphoenolpyruvate site. 6 residues coordinate 3-phosphoshikimate: S163, S164, Q165, S191, D304, and K331. Q165 contributes to the phosphoenolpyruvate binding site. The active-site Proton acceptor is D304. The phosphoenolpyruvate site is built by R335 and R377.

It belongs to the EPSP synthase family. As to quaternary structure, monomer.

It is found in the cytoplasm. It carries out the reaction 3-phosphoshikimate + phosphoenolpyruvate = 5-O-(1-carboxyvinyl)-3-phosphoshikimate + phosphate. The protein operates within metabolic intermediate biosynthesis; chorismate biosynthesis. Catalyzes the transfer of the enolpyruvyl moiety of phosphoenolpyruvate (PEP) to the 5-hydroxyl of shikimate-3-phosphate (S3P) to produce enolpyruvyl shikimate-3-phosphate and inorganic phosphate. This is 3-phosphoshikimate 1-carboxyvinyltransferase from Methanocorpusculum labreanum (strain ATCC 43576 / DSM 4855 / Z).